We begin with the raw amino-acid sequence, 99 residues long: Integration host factor subunit alpha (99 aa).

Residues Phe-49–Ile-71 are disordered.

This sequence belongs to the bacterial histone-like protein family. Heterodimer of an alpha and a beta chain.

Its function is as follows. This protein is one of the two subunits of integration host factor, a specific DNA-binding protein that functions in genetic recombination as well as in transcriptional and translational control. The sequence is that of Integration host factor subunit alpha from Shewanella denitrificans (strain OS217 / ATCC BAA-1090 / DSM 15013).